A 563-amino-acid polypeptide reads, in one-letter code: Arginine--tRNA ligase (563 aa).

Positions 121–131 match the 'HIGH' region motif; the sequence is PNIAKPFSIGH.

Belongs to the class-I aminoacyl-tRNA synthetase family. As to quaternary structure, monomer.

It is found in the cytoplasm. It carries out the reaction tRNA(Arg) + L-arginine + ATP = L-arginyl-tRNA(Arg) + AMP + diphosphate. This chain is Arginine--tRNA ligase, found in Streptococcus pneumoniae (strain ATCC BAA-255 / R6).